The sequence spans 356 residues: Arginine kinase (356 aa).

N-acetylalanine is present on Ala2. The Phosphagen kinase N-terminal domain maps to 9 to 91; sequence KLEAGFKKLE…FDPIIEDYHV (83 aa). 64 to 68 is a binding site for L-arginine; sequence GVGIY. In terms of domain architecture, Phosphagen kinase C-terminal spans 119-356; it reads YVISTRVRCG…LELIKMEKEM (238 aa). Residues 122 to 126 and His185 each bind ATP; that span reads STRVR. Residue Glu225 participates in L-arginine binding. ATP is bound at residue Arg229. L-arginine is bound at residue Cys271. ATP-binding positions include 280–284 and 309–314; these read RASVH and RGTRGE. Glu314 serves as a coordination point for L-arginine.

This sequence belongs to the ATP:guanido phosphotransferase family.

It carries out the reaction L-arginine + ATP = N(omega)-phospho-L-arginine + ADP + H(+). The polypeptide is Arginine kinase (Penaeus monodon (Giant tiger prawn)).